Reading from the N-terminus, the 348-residue chain is Protein RecA (348 aa).

Position 66–73 (66–73 (GPESSGKT)) interacts with ATP.

Belongs to the RecA family.

It localises to the cytoplasm. Functionally, can catalyze the hydrolysis of ATP in the presence of single-stranded DNA, the ATP-dependent uptake of single-stranded DNA by duplex DNA, and the ATP-dependent hybridization of homologous single-stranded DNAs. It interacts with LexA causing its activation and leading to its autocatalytic cleavage. This is Protein RecA from Neisseria meningitidis serogroup A / serotype 4A (strain DSM 15465 / Z2491).